Consider the following 443-residue polypeptide: MRNIVYFILTLFSLTSYALETINIEHGRVDPTPIAVNKFNADSSNNDLVGRDVVKVISNDLKISGLFRPISSASFIEEQTGIKYKPLFAAWRQINASLLVNGEVKTLENGKLKISFILWDTFLEKQLTGALFEVPTKLWRRAAHKIADKIYEKITGDPGYFDTKIVYVSESTVLPKIKRIALMDYDGANNKYLTNGKSLVLTPRFAHSADKIFYVSYATKSRALVYEKDLKTGKESVVGDFVGISFAPRFSPDGKKAVMSIAKNGSTHIYEIDLATKQLNKLTNGFGINTSPSYSPDGKKIVFNSDKNGVPQLYIMNSDGSDVQRISFGVGSYASPSWSPRGDYIAFTKIIRQDGEKTFNIGIMKAYPQDHGNSERIITSGYLVDSPCWSPNGRVIMFSKGWPSKANAPGKNKIFTIDLTGHNEREIITPADASDPEWSGILN.

The N-terminal stretch at 1 to 18 (MRNIVYFILTLFSLTSYA) is a signal peptide.

It belongs to the TolB family. The Tol-Pal system is composed of five core proteins: the inner membrane proteins TolA, TolQ and TolR, the periplasmic protein TolB and the outer membrane protein Pal. They form a network linking the inner and outer membranes and the peptidoglycan layer.

It is found in the periplasm. Its function is as follows. Part of the Tol-Pal system, which plays a role in outer membrane invagination during cell division and is important for maintaining outer membrane integrity. In Rickettsia prowazekii (strain Madrid E), this protein is Tol-Pal system protein TolB.